The following is a 155-amino-acid chain: MESINESYDDSSSFGQDSLLYNRPFAYLYLSFHLKLLYSVPASYIAMIRAGSVGKKSTCEYTYWDDGVGEEVMGDDSWDYEGRKISHIYVAFDEVIMSIQFGFLENGALVLSKQHGGIEEGSNFRVVSFVSITIIYFCVCVRSGQVLFLMKFKRS.

The next 2 helical transmembrane spans lie at 26–48 and 127–149; these read AYLY…IAMI and VSFV…VLFL. Residues 47 to 155 form the Jacalin-type lectin domain; the sequence is MIRAGSVGKK…VLFLMKFKRS (109 aa).

Belongs to the jacalin lectin family.

It is found in the membrane. The protein is Probable jacalin-related lectin 26 (JAL26) of Arabidopsis thaliana (Mouse-ear cress).